Consider the following 554-residue polypeptide: Inactive serine/threonine-protein kinase/endoribonuclease IRE1-like (554 aa).

Positions 1 to 17 (MWLLAISLVGLLVVVVC) are cleaved as a signal peptide. The segment at 36-85 (KRDKNSAPRVSASGEDGTKNEQVEKKSDPSGGLGEENEKTNSESKVLSVP) is disordered. The span at 51-63 (DGTKNEQVEKKSD) shows a compositional bias: basic and acidic residues. A Protein kinase domain is found at 121 to 408 (LVSTNEMKYG…ATQVLLHPLF (288 aa)). ATP is bound at residue Lys-150. The KEN domain maps to 411–554 (SEKRLFFLRE…GEEAFEKYFN (144 aa)).

It belongs to the protein kinase superfamily. Ser/Thr protein kinase family.

The chain is Inactive serine/threonine-protein kinase/endoribonuclease IRE1-like from Arabidopsis thaliana (Mouse-ear cress).